The primary structure comprises 257 residues: Flavin-dependent thymidylate synthase (257 aa).

The 202-residue stretch at 1–202 (MNVKLVSYTR…PRLFRYVGPN (202 aa)) folds into the ThyX domain. Residues Ser-55, 79 to 81 (RHR), and Gln-87 contribute to the FAD site. Residues 76–79 (QLVR), 87–91 (QMSHR), and Arg-141 each bind dUMP. The short motif at 79–89 (RHRVASYTQMS) is the ThyX motif element. FAD is bound by residues 157-159 (NAR) and Asn-163. Residue Arg-168 coordinates dUMP. The active-site Involved in ionization of N3 of dUMP, leading to its activation is the Arg-168.

Belongs to the thymidylate synthase ThyX family. As to quaternary structure, homotetramer. The cofactor is FAD.

The enzyme catalyses dUMP + (6R)-5,10-methylene-5,6,7,8-tetrahydrofolate + NADPH + H(+) = dTMP + (6S)-5,6,7,8-tetrahydrofolate + NADP(+). It functions in the pathway pyrimidine metabolism; dTTP biosynthesis. Functionally, catalyzes the reductive methylation of 2'-deoxyuridine-5'-monophosphate (dUMP) to 2'-deoxythymidine-5'-monophosphate (dTMP) while utilizing 5,10-methylenetetrahydrofolate (mTHF) as the methyl donor, and NADPH and FADH(2) as the reductant. This Sulfurisphaera tokodaii (strain DSM 16993 / JCM 10545 / NBRC 100140 / 7) (Sulfolobus tokodaii) protein is Flavin-dependent thymidylate synthase.